The primary structure comprises 236 residues: Small ribosomal subunit protein uS2c (236 aa).

This sequence belongs to the universal ribosomal protein uS2 family.

It is found in the plastid. It localises to the chloroplast. The protein is Small ribosomal subunit protein uS2c (rps2) of Oryza sativa (Rice).